Reading from the N-terminus, the 374-residue chain is Putative phosphoserine aminotransferase (374 aa).

Arginine 48 lines the L-glutamate pocket. Residues 82–83 (AT), phenylalanine 106, threonine 152, aspartate 174, and glutamine 197 each bind pyridoxal 5'-phosphate. Lysine 198 is modified (N6-(pyridoxal phosphate)lysine). 249-250 (NT) contributes to the pyridoxal 5'-phosphate binding site.

It belongs to the class-V pyridoxal-phosphate-dependent aminotransferase family. SerC subfamily. In terms of assembly, homodimer. Requires pyridoxal 5'-phosphate as cofactor.

It is found in the cytoplasm. It catalyses the reaction O-phospho-L-serine + 2-oxoglutarate = 3-phosphooxypyruvate + L-glutamate. The enzyme catalyses 4-(phosphooxy)-L-threonine + 2-oxoglutarate = (R)-3-hydroxy-2-oxo-4-phosphooxybutanoate + L-glutamate. It functions in the pathway amino-acid biosynthesis; L-serine biosynthesis; L-serine from 3-phospho-D-glycerate: step 2/3. The protein operates within cofactor biosynthesis; pyridoxine 5'-phosphate biosynthesis; pyridoxine 5'-phosphate from D-erythrose 4-phosphate: step 3/5. Catalyzes the reversible conversion of 3-phosphohydroxypyruvate to phosphoserine and of 3-hydroxy-2-oxo-4-phosphonooxybutanoate to phosphohydroxythreonine. The chain is Putative phosphoserine aminotransferase from Mycolicibacterium paratuberculosis (strain ATCC BAA-968 / K-10) (Mycobacterium paratuberculosis).